We begin with the raw amino-acid sequence, 368 residues long: Aminomethyltransferase (368 aa).

This sequence belongs to the GcvT family. In terms of assembly, the glycine cleavage system is composed of four proteins: P, T, L and H.

The enzyme catalyses N(6)-[(R)-S(8)-aminomethyldihydrolipoyl]-L-lysyl-[protein] + (6S)-5,6,7,8-tetrahydrofolate = N(6)-[(R)-dihydrolipoyl]-L-lysyl-[protein] + (6R)-5,10-methylene-5,6,7,8-tetrahydrofolate + NH4(+). Functionally, the glycine cleavage system catalyzes the degradation of glycine. This chain is Aminomethyltransferase, found in Thermoanaerobacter pseudethanolicus (strain ATCC 33223 / 39E) (Clostridium thermohydrosulfuricum).